The following is a 130-amino-acid chain: Ion transport peptide (130 aa).

3 cysteine pairs are disulfide-bonded: Cys62/Cys98, Cys78/Cys94, and Cys81/Cys107. A Leucine amide modification is found at Leu127.

This sequence belongs to the arthropod CHH/MIH/GIH/VIH hormone family. Brain and corpus cardiacum.

Its subcellular location is the secreted. In terms of biological role, stimulates salt and water reabsorption and inhibits acid secretion in the ileum of S.gregaria. In Schistocerca gregaria (Desert locust), this protein is Ion transport peptide.